The primary structure comprises 1059 residues: Potassium transporter TRK1 (1059 aa).

Residues 1–46 (MLYRVSGFYKRHTRNFTNIDYGYYIRNFIHHIASKIYPYAKVVLPN) are Cytoplasmic-facing. Residues 47–67 (FRAAHYFYILTLVILGSILVY) form a helical membrane-spanning segment. Residues 68–73 (PVKTCA) are Extracellular-facing. Residues 74-90 (YIDVLFFTAGASTQAGL) lie within the membrane without spanning it. Over 91–99 (NTVNVNDLS) the chain is Extracellular. Residues 100-122 (LYQQIVLYLLATLATPIFIHGSL) form a helical membrane-spanning segment. Topologically, residues 123–625 (LFVRLYYFER…LGGIEYRAVK (503 aa)) are cytoplasmic. Disordered stretches follow at residues 180 to 276 (REAE…IDPE), 304 to 350 (IGSP…EDED), and 404 to 574 (PWTS…SIEN). A compositionally biased stretch (low complexity) spans 186 to 203 (SSSSPQSSSSQTSQPVST). Over residues 236-245 (EKIHFEEPQR) the composition is skewed to basic and acidic residues. The span at 335-344 (PATNSVGTGN) shows a compositional bias: polar residues. The segment covering 412 to 423 (TLSNSSKKGSLS) has biased composition (low complexity). Composition is skewed to acidic residues over residues 428 to 449 (DTED…SDIS) and 469 to 490 (YEED…DDGE). Residues 524 to 536 (RSNTLDTPQQNTS) are compositionally biased toward polar residues. Over residues 540 to 552 (KIRKKAPKRKTPR) the composition is skewed to basic residues. A compositionally biased stretch (polar residues) spans 556 to 566 (NASFNQHSNVS). A helical membrane pass occupies residues 626 to 649 (LLIKIIVVYYVGFNIIPGVMLSIW). Residues 650–668 (IYCMPHYKNLMISSSISPA) are Extracellular-facing. An intramembrane segment occupies 669-685 (WWAFFTSQSSFNDLGLT). At 686 to 696 (LTSNSMMSFNQ) the chain is on the extracellular side. Residues 697–713 (NAFVQILCSFLIVIGNT) form a helical membrane-spanning segment. The Cytoplasmic portion of the chain corresponds to 714–757 (GFPILLRFIIWVMFKTARPLSLYKESLGFLLDHPRRCFTLLFPS). The helical transmembrane segment at 758 to 781 (VPTWWLFFILVVLNGFDLVIFCIL) threads the bilayer. Topologically, residues 782-796 (DLHDDTFKGVDMGYR) are extracellular. Residues 797 to 813 (VLNGLFQAFCTRTVGFS) lie within the membrane without spanning it. At 814 to 820 (VMDLSQL) the chain is on the extracellular side. Residues 821–844 (HAATQVSYLIMMYISVLPIAISVR) form a helical membrane-spanning segment. Residues 845 to 877 (RTNVYEEQSLGVYAKENAEGVDESAPSNYVGSH) lie on the Cytoplasmic side of the membrane. The helical transmembrane segment at 878–899 (LRNQLSYDLWYICLGLFIICIA) threads the bilayer. Residues 900 to 912 (EGKRLKEQDLRFS) are Extracellular-facing. Residues 913–931 (IFAVLFEIVSAYGTVGMSM) lie within the membrane without spanning it. Over 932-945 (GYPGVDCSLSGEFN) the chain is Extracellular. Residues 946–968 (VISKLVIIAMMIRGRHRGLPYTI) form a helical membrane-spanning segment. Residues 969–1059 (DRAIMLPNAA…RYVVRTVSEV (91 aa)) are Cytoplasmic-facing.

It belongs to the TrkH potassium transport family.

It localises to the cell membrane. It carries out the reaction K(+)(in) = K(+)(out). The catalysed reaction is chloride(in) = chloride(out). TRK1-mediated chloride conductance is blocked by 4,4'-diisothiocyanatostilbene-2,2'-disulfonic acid. In terms of biological role, potassium transporter that mediates K(+) influx, as well as Cl(-) efflux as a secondary function. TRK1 is the major K(+) uptake transporter that regulates membrane potential and intracellular pH. The TRK1-mediated Cl(-) efflux should serve as a Cl(-) detoxification route and may play a role in sustaining C.albicans on mammalian epithelial surfaces, or in physiological saline solutions such as saliva. Functionally, mediates candidacidal activities of cysteine-free peptides, but not of defensins. The hallmark of salivary gland-secreted histatin-5 (Hst 5) killing of C.albicans is the rapid efflux of cellular ATP and other small nucleotides and ions from the cell as well as concurrent intracellular uptake of propidium iodide (PI). TRK1 is the channel for Hst 5-induced killing and histatin-5 may directly or indirectly alter TRK1 function, allowing the efflux of larger anions, including ATP, and the influx of small cationic dyes, such as PI. In Candida albicans (Yeast), this protein is Potassium transporter TRK1.